Consider the following 293-residue polypeptide: 4-hydroxy-tetrahydrodipicolinate synthase (293 aa).

Pyruvate is bound at residue T47. The Proton donor/acceptor role is filled by Y136. K164 serves as the catalytic Schiff-base intermediate with substrate. Residue I206 coordinates pyruvate.

This sequence belongs to the DapA family. As to quaternary structure, homotetramer; dimer of dimers.

Its subcellular location is the cytoplasm. The enzyme catalyses L-aspartate 4-semialdehyde + pyruvate = (2S,4S)-4-hydroxy-2,3,4,5-tetrahydrodipicolinate + H2O + H(+). It participates in amino-acid biosynthesis; L-lysine biosynthesis via DAP pathway; (S)-tetrahydrodipicolinate from L-aspartate: step 3/4. Catalyzes the condensation of (S)-aspartate-beta-semialdehyde [(S)-ASA] and pyruvate to 4-hydroxy-tetrahydrodipicolinate (HTPA). In Listeria monocytogenes serotype 4b (strain CLIP80459), this protein is 4-hydroxy-tetrahydrodipicolinate synthase.